We begin with the raw amino-acid sequence, 224 residues long: Uracil-DNA glycosylase (224 aa).

The active-site Proton acceptor is the D65.

This sequence belongs to the uracil-DNA glycosylase (UDG) superfamily. UNG family.

The protein localises to the cytoplasm. The catalysed reaction is Hydrolyzes single-stranded DNA or mismatched double-stranded DNA and polynucleotides, releasing free uracil.. In terms of biological role, excises uracil residues from the DNA which can arise as a result of misincorporation of dUMP residues by DNA polymerase or due to deamination of cytosine. The protein is Uracil-DNA glycosylase of Buchnera aphidicola subsp. Baizongia pistaciae (strain Bp).